Consider the following 307-residue polypeptide: tRNA pseudouridine synthase B (307 aa).

Catalysis depends on Asp-47, which acts as the Nucleophile.

This sequence belongs to the pseudouridine synthase TruB family. Type 1 subfamily.

It catalyses the reaction uridine(55) in tRNA = pseudouridine(55) in tRNA. Its function is as follows. Responsible for synthesis of pseudouridine from uracil-55 in the psi GC loop of transfer RNAs. The sequence is that of tRNA pseudouridine synthase B from Chromohalobacter salexigens (strain ATCC BAA-138 / DSM 3043 / CIP 106854 / NCIMB 13768 / 1H11).